The sequence spans 585 residues: Arginine--tRNA ligase (585 aa).

The short motif at 127 to 137 (PNTNKPLHVGH) is the 'HIGH' region element.

Belongs to the class-I aminoacyl-tRNA synthetase family. In terms of assembly, monomer.

It is found in the cytoplasm. It catalyses the reaction tRNA(Arg) + L-arginine + ATP = L-arginyl-tRNA(Arg) + AMP + diphosphate. The sequence is that of Arginine--tRNA ligase from Borrelia duttonii (strain Ly).